The following is a 296-amino-acid chain: Cytidine deaminase (296 aa).

CMP/dCMP-type deaminase domains lie at 47–167 (TEAE…FGPK) and 186–296 (DSSD…VDPV). 88–90 (NLE) contacts substrate. Histidine 101 serves as a coordination point for Zn(2+). Glutamate 103 (proton donor) is an active-site residue. The Zn(2+) site is built by cysteine 128 and cysteine 131.

The protein belongs to the cytidine and deoxycytidylate deaminase family. As to quaternary structure, homodimer. The cofactor is Zn(2+).

The catalysed reaction is cytidine + H2O + H(+) = uridine + NH4(+). It catalyses the reaction 2'-deoxycytidine + H2O + H(+) = 2'-deoxyuridine + NH4(+). In terms of biological role, this enzyme scavenges exogenous and endogenous cytidine and 2'-deoxycytidine for UMP synthesis. This is Cytidine deaminase from Shewanella sp. (strain MR-4).